The sequence spans 281 residues: Transmembrane protein 163 (281 aa).

Residues 1–80 are Cytoplasmic-facing; that stretch reads MEPLDTELCY…HEAQNYRKKA (80 aa). Residues 16–44 form a disordered region; that stretch reads IVQPSCNGQTPPGHRTLSPTQQMDHEQQM. The chain crosses the membrane as a helical span at residues 81–101; that stretch reads LWVSWLSIAITLILAIAAFTV. The Extracellular portion of the chain corresponds to 102-108; sequence SVMRYSA. A helical membrane pass occupies residues 109 to 129; it reads SSFGFALDAVLDVLSSAIVLW. Topologically, residues 130–145 are cytoplasmic; it reads RYSNAAAVHSAHREYM. The helical transmembrane segment at 146–166 threads the bilayer; the sequence is ACCILGVIFLLSSICIVSKAI. Topologically, residues 167-179 are extracellular; the sequence is HDLSIRVMPEVDG. Residues 180 to 200 form a helical membrane-spanning segment; that stretch reads FLFSVSILSGILCSLLAAIKF. At 201 to 209 the chain is on the cytoplasmic side; it reads MLGKVLTSR. A helical membrane pass occupies residues 210-230; the sequence is ALITDGFNSLVGGIMGFSILL. Over 231–240 the chain is Extracellular; that stretch reads SAEVYKHNSK. Residues 241–261 form a helical membrane-spanning segment; it reads VWYLDGSVGILIGLIIMSYGI. The Cytoplasmic segment spans residues 262–281; the sequence is KLLMDMVPRVRQTRHYEMFE.

The protein belongs to the TMEM163 family.

The protein localises to the cytoplasmic vesicle. The protein resides in the secretory vesicle. Its subcellular location is the synaptic vesicle membrane. It is found in the early endosome membrane. May bind zinc and other divalent cations and recruit them to vesicular organelles. This Xenopus laevis (African clawed frog) protein is Transmembrane protein 163 (tmem163).